The sequence spans 638 residues: Zinc finger protein 143 (638 aa).

Position 1 is an N-acetylmethionine (Met1). A Glycyl lysine isopeptide (Lys-Gly) (interchain with G-Cter in SUMO2) cross-link involves residue Lys213. 4 consecutive C2H2-type zinc fingers follow at residues 237-261 (FRCK…ERSH), 267-291 (YQCE…FRTH), 297-321 (YRCS…IRTH), and 327-351 (FKCP…IRTH). Thr352 carries the post-translational modification Phosphothreonine. 3 C2H2-type zinc fingers span residues 357–381 (YYCT…VRIH), 387–411 (YVCT…HVVH), and 417–440 (YNCN…RTAH). Lys406 is covalently cross-linked (Glycyl lysine isopeptide (Lys-Gly) (interchain with G-Cter in SUMO2)).

Belongs to the GLI C2H2-type zinc-finger protein family. Interacts with CHD8. Forms a complex with HCFC1 and ZNF143.

It is found in the nucleus. Its function is as follows. Transcriptional activator. Activates the gene for selenocysteine tRNA (tRNAsec). Binds to the SPH motif of small nuclear RNA (snRNA) gene promoters. Participates in efficient U6 RNA polymerase III transcription via its interaction with CHD8. In complex with HCFC1 and ZNF143, regulates the expression of several genes, including AP2S1, ESCO2, OPHN1, RBL1, UBXN8 and ZNF32. The chain is Zinc finger protein 143 (Znf143) from Mus musculus (Mouse).